The primary structure comprises 78 residues: Large ribosomal subunit protein bL28 (78 aa).

A disordered region spans residues 1-25 (MSRVCQVTGKRPAVGNNRSHAKNAT).

It belongs to the bacterial ribosomal protein bL28 family.

This Aliivibrio fischeri (strain ATCC 700601 / ES114) (Vibrio fischeri) protein is Large ribosomal subunit protein bL28.